Here is a 207-residue protein sequence, read N- to C-terminus: Small ribosomal subunit protein uS4 (207 aa).

A compositionally biased stretch (basic and acidic residues) spans 31-40 (KCRLDNKPGQ). Positions 31-56 (KCRLDNKPGQDGRTSGSRTSDYGNQL) are disordered. A compositionally biased stretch (polar residues) spans 42 to 53 (GRTSGSRTSDYG). An S4 RNA-binding domain is found at 97–158 (SRLDNVVYRM…KAKKQARITE (62 aa)).

This sequence belongs to the universal ribosomal protein uS4 family. As to quaternary structure, part of the 30S ribosomal subunit. Contacts protein S5. The interaction surface between S4 and S5 is involved in control of translational fidelity.

In terms of biological role, one of the primary rRNA binding proteins, it binds directly to 16S rRNA where it nucleates assembly of the body of the 30S subunit. Its function is as follows. With S5 and S12 plays an important role in translational accuracy. In Polynucleobacter necessarius subsp. necessarius (strain STIR1), this protein is Small ribosomal subunit protein uS4.